We begin with the raw amino-acid sequence, 368 residues long: Probable endopolygalacturonase I (368 aa).

An N-terminal signal peptide occupies residues 1–18 (MHSFQLLGLAALGSLVAA). Residues 19–31 (APSPSRVSDLTER) constitute a propeptide that is removed on maturation. A disulfide bond links Cys-35 and Cys-50. PbH1 repeat units follow at residues 162-192 (ANNLHLTDITIDNSDGDSKGGHNTDGFDISE), 193-214 (SNGVYISGANVKNQDDCIAINS), 215-235 (GKNIEFTGGTCSGGHGLSIGS), 244-265 (VQGVKITDSTVTNSDNGIRIKT), 273-295 (VSDVTYSNIKLSGIHKKGIVIQQ), and 307-328 (SNGIPIKDVTVDGITGSVDSKA). Asp-207 acts as the Proton donor in catalysis. Cys-209 and Cys-225 form a disulfide bridge. His-229 is an active-site residue. Disulfide bonds link Cys-335/Cys-340 and Cys-359/Cys-368.

Belongs to the glycosyl hydrolase 28 family.

The protein localises to the secreted. It carries out the reaction (1,4-alpha-D-galacturonosyl)n+m + H2O = (1,4-alpha-D-galacturonosyl)n + (1,4-alpha-D-galacturonosyl)m.. Functionally, involved in maceration and soft-rotting of plant tissue. Hydrolyzes the 1,4-alpha glycosidic bonds of de-esterified pectate in the smooth region of the plant cell wall. This chain is Probable endopolygalacturonase I (pgaI), found in Aspergillus terreus (strain NIH 2624 / FGSC A1156).